The chain runs to 174 residues: Endoribonuclease YbeY (174 aa).

Zn(2+) contacts are provided by His129, His133, and His139.

It belongs to the endoribonuclease YbeY family. Zn(2+) is required as a cofactor.

It is found in the cytoplasm. Single strand-specific metallo-endoribonuclease involved in late-stage 70S ribosome quality control and in maturation of the 3' terminus of the 16S rRNA. This chain is Endoribonuclease YbeY, found in Lactobacillus delbrueckii subsp. bulgaricus (strain ATCC 11842 / DSM 20081 / BCRC 10696 / JCM 1002 / NBRC 13953 / NCIMB 11778 / NCTC 12712 / WDCM 00102 / Lb 14).